Here is a 231-residue protein sequence, read N- to C-terminus: Endonuclease NucS (231 aa).

It belongs to the NucS endonuclease family.

The protein localises to the cytoplasm. In terms of biological role, cleaves both 3' and 5' ssDNA extremities of branched DNA structures. The sequence is that of Endonuclease NucS from Kocuria rhizophila (strain ATCC 9341 / DSM 348 / NBRC 103217 / DC2201).